Reading from the N-terminus, the 231-residue chain is 6-hydroxymethyl-7,8-dihydropterin pyrophosphokinase (231 aa).

This sequence belongs to the archaeal 6-HMPDK family. Mg(2+) is required as a cofactor.

The enzyme catalyses 6-hydroxymethyl-7,8-dihydropterin + ATP = (7,8-dihydropterin-6-yl)methyl diphosphate + AMP + H(+). Functionally, catalyzes the transfer of diphosphate from ATP to 6-hydroxymethyl-7,8-dihydropterin (6-HMD), leading to 6-hydroxymethyl-7,8-dihydropterin diphosphate (6-HMDP). To a lesser extent, can also use CTP, UTP, and GTP as the nucleotide triphosphate substrate. This Pyrococcus furiosus (strain ATCC 43587 / DSM 3638 / JCM 8422 / Vc1) protein is 6-hydroxymethyl-7,8-dihydropterin pyrophosphokinase.